Consider the following 582-residue polypeptide: Proline--tRNA ligase (582 aa).

Belongs to the class-II aminoacyl-tRNA synthetase family. ProS type 1 subfamily. In terms of assembly, homodimer.

It localises to the cytoplasm. The catalysed reaction is tRNA(Pro) + L-proline + ATP = L-prolyl-tRNA(Pro) + AMP + diphosphate. In terms of biological role, catalyzes the attachment of proline to tRNA(Pro) in a two-step reaction: proline is first activated by ATP to form Pro-AMP and then transferred to the acceptor end of tRNA(Pro). As ProRS can inadvertently accommodate and process non-cognate amino acids such as alanine and cysteine, to avoid such errors it has two additional distinct editing activities against alanine. One activity is designated as 'pretransfer' editing and involves the tRNA(Pro)-independent hydrolysis of activated Ala-AMP. The other activity is designated 'posttransfer' editing and involves deacylation of mischarged Ala-tRNA(Pro). The misacylated Cys-tRNA(Pro) is not edited by ProRS. The protein is Proline--tRNA ligase of Mycobacterium ulcerans (strain Agy99).